The chain runs to 319 residues: Protein MGF 360-8L (319 aa).

This sequence belongs to the asfivirus MGF 360 family.

Functionally, plays a role in virus cell tropism, and may be required for efficient virus replication in macrophages. This African swine fever virus (isolate Warthog/Namibia/Wart80/1980) (ASFV) protein is Protein MGF 360-8L.